Here is a 338-residue protein sequence, read N- to C-terminus: L-serine dehydratase (338 aa).

Lysine 39 carries the N6-(pyridoxal phosphate)lysine modification.

This sequence belongs to the serine/threonine dehydratase family. Pyridoxal 5'-phosphate is required as a cofactor.

It localises to the cytoplasm. It carries out the reaction L-serine = pyruvate + NH4(+). It functions in the pathway carbohydrate biosynthesis; gluconeogenesis. The protein is L-serine dehydratase (SDL1) of Saccharomyces cerevisiae (Baker's yeast).